Reading from the N-terminus, the 147-residue chain is Sec-independent protein translocase protein TatB (147 aa).

A helical membrane pass occupies residues 1-21 (MFDFGFSELIVIAVVTLIVVG). Positions 117 to 147 (APAPMSLAPHGDAASAGREPAAVPGSGPEKA) are disordered.

It belongs to the TatB family. In terms of assembly, the Tat system comprises two distinct complexes: a TatABC complex, containing multiple copies of TatA, TatB and TatC subunits, and a separate TatA complex, containing only TatA subunits. Substrates initially bind to the TatABC complex, which probably triggers association of the separate TatA complex to form the active translocon.

The protein resides in the cell inner membrane. In terms of biological role, part of the twin-arginine translocation (Tat) system that transports large folded proteins containing a characteristic twin-arginine motif in their signal peptide across membranes. Together with TatC, TatB is part of a receptor directly interacting with Tat signal peptides. TatB may form an oligomeric binding site that transiently accommodates folded Tat precursor proteins before their translocation. The sequence is that of Sec-independent protein translocase protein TatB from Aromatoleum aromaticum (strain DSM 19018 / LMG 30748 / EbN1) (Azoarcus sp. (strain EbN1)).